A 225-amino-acid polypeptide reads, in one-letter code: MOB-like protein phocein (225 aa).

Residues cysteine 92, cysteine 97, cysteine 110, histidine 113, cysteine 119, histidine 127, histidine 169, and histidine 174 each contribute to the Zn(2+) site.

This sequence belongs to the MOB1/phocein family. As to quaternary structure, binds STRN4. Interacts with DNM1 and EPS15. Interacts with nucleoside diphosphate kinase. Interacts with CTTNBP2. Interacts with CTTNBP2NL. Part of the core of STRIPAK complexes composed of PP2A catalytic and scaffolding subunits, the striatins (PP2A regulatory subunits), the striatin-associated proteins MOB4, STRIP1 and STRIP2, PDCD10 and members of the STE20 kinases, such as STK24 and STK26. Post-translationally, phosphorylated on serine residues. Highly expressed in adrenal gland, spinal cord, brain and cerebellum. Detected at lower levels in heart and skeletal muscle, and at very low levels in spleen, liver and intestine.

The protein resides in the cytoplasm. It is found in the membrane. Its subcellular location is the golgi apparatus. It localises to the golgi stack membrane. Part of the striatin-interacting phosphatase and kinase (STRIPAK) complexes. STRIPAK complexes have critical roles in protein (de)phosphorylation and are regulators of multiple signaling pathways including Hippo, MAPK, nuclear receptor and cytoskeleton remodeling. Different types of STRIPAK complexes are involved in a variety of biological processes such as cell growth, differentiation, apoptosis, metabolism and immune regulation. The sequence is that of MOB-like protein phocein (Mob4) from Rattus norvegicus (Rat).